The chain runs to 300 residues: Bifunctional protein FolD (300 aa).

NADP(+) contacts are provided by residues 168-170 (GRS), Ser-193, and Ile-234.

Belongs to the tetrahydrofolate dehydrogenase/cyclohydrolase family. As to quaternary structure, homodimer.

It carries out the reaction (6R)-5,10-methylene-5,6,7,8-tetrahydrofolate + NADP(+) = (6R)-5,10-methenyltetrahydrofolate + NADPH. The enzyme catalyses (6R)-5,10-methenyltetrahydrofolate + H2O = (6R)-10-formyltetrahydrofolate + H(+). The protein operates within one-carbon metabolism; tetrahydrofolate interconversion. Functionally, catalyzes the oxidation of 5,10-methylenetetrahydrofolate to 5,10-methenyltetrahydrofolate and then the hydrolysis of 5,10-methenyltetrahydrofolate to 10-formyltetrahydrofolate. In Ehrlichia ruminantium (strain Welgevonden), this protein is Bifunctional protein FolD.